The following is a 108-amino-acid chain: Large ribosomal subunit protein uL22 (108 aa).

Belongs to the universal ribosomal protein uL22 family. Part of the 50S ribosomal subunit.

In terms of biological role, this protein binds specifically to 23S rRNA; its binding is stimulated by other ribosomal proteins, e.g. L4, L17, and L20. It is important during the early stages of 50S assembly. It makes multiple contacts with different domains of the 23S rRNA in the assembled 50S subunit and ribosome. Functionally, the globular domain of the protein is located near the polypeptide exit tunnel on the outside of the subunit, while an extended beta-hairpin is found that lines the wall of the exit tunnel in the center of the 70S ribosome. This chain is Large ribosomal subunit protein uL22, found in Desulfatibacillum aliphaticivorans.